A 237-amino-acid chain; its full sequence is MVISSLSNSQPLNAPVSSSPITQELANNLILTTLNDLYNWARLSSLWPLLYGTSCCFIEFACLIGSRFDFDRFGLVPRSSPRQADLIITAGTVTMKMAPSLVRLYEQMPDPKYVIAMGACTITGGMFSTDSYSTVRGVDKLIPVDVYLPGCPPKPEAIIDAVIKLRKKVAQEQTAERRGIEQIHRYFTLSHRLQPVSPILTGQYLQAETRQAPPRELATGLDTLVPRSLEANYIERF.

4 residues coordinate [4Fe-4S] cluster: Cys-55, Cys-56, Cys-120, and Cys-151.

The protein belongs to the complex I 20 kDa subunit family. NDH is composed of at least 16 different subunits, 5 of which are encoded in the nucleus. Requires [4Fe-4S] cluster as cofactor.

It is found in the plastid. Its subcellular location is the chloroplast thylakoid membrane. The catalysed reaction is a plastoquinone + NADH + (n+1) H(+)(in) = a plastoquinol + NAD(+) + n H(+)(out). It carries out the reaction a plastoquinone + NADPH + (n+1) H(+)(in) = a plastoquinol + NADP(+) + n H(+)(out). Functionally, NDH shuttles electrons from NAD(P)H:plastoquinone, via FMN and iron-sulfur (Fe-S) centers, to quinones in the photosynthetic chain and possibly in a chloroplast respiratory chain. The immediate electron acceptor for the enzyme in this species is believed to be plastoquinone. Couples the redox reaction to proton translocation, and thus conserves the redox energy in a proton gradient. The polypeptide is NAD(P)H-quinone oxidoreductase subunit K, chloroplastic (Nephroselmis olivacea (Green alga)).